Here is a 371-residue protein sequence, read N- to C-terminus: Geranylgeranyl transferase type-2 subunit alpha (371 aa).

PFTA repeat units lie at residues 45-79, 92-126, 131-165, 177-211, and 242-276; these read YSDE…NNYS, ILNQ…ELVK, NWKY…NMEL, INLD…KIYN, and LLKN…DDLF.

Belongs to the protein prenyltransferase subunit alpha family. Heterodimer of an alpha and a beta subunit.

It catalyses the reaction geranylgeranyl diphosphate + L-cysteinyl-[protein] = S-geranylgeranyl-L-cysteinyl-[protein] + diphosphate. Its function is as follows. Catalyzes the transfer of a geranyl-geranyl moiety from geranyl-geranyl pyrophosphate to proteins having the C-terminal -XCC or -XCXC, where both cysteines may become modified. Acts on YPT1 and SEC4. The chain is Geranylgeranyl transferase type-2 subunit alpha (BET4) from Candida albicans (Yeast).